Consider the following 307-residue polypeptide: MSDFEMEDSASGYDSGDNSDAELQAAFERGDLKPGLNVEFNGQRDKVNDVTKLLAKTEAIKMQLPWLERLDMINTLAPLAPELAVQLEKHEQKRANLFKGNAKLPYIRPEEDPVLNDFKREMLFHRQAQSAVLEAIPRLHELGIKTRRPDDYFAEMAKSDEHMQKVRANLMAKQQGQAKSERIKQIREQRKMGKMLAKQTKVQREAEKKDMLDKLKKFRKGKLKNLDFLEDAKALESKQKQSAENRKKRNKKFGFGGKKKGLKRNTKSSSAGLDGDKSSRRQRGVKAGASVNKRLGKSRRIKAKGRK.

Disordered regions lie at residues 1–22 (MSDF…SDAE), 189–208 (QRKM…EAEK), and 236–307 (ESKQ…KGRK). Positions 205-252 (EAEKKDMLDKLKKFRKGKLKNLDFLEDAKALESKQKQSAENRKKRNKK) form a coiled coil. A compositionally biased stretch (basic and acidic residues) spans 236–245 (ESKQKQSAEN). Basic residues-rich tracts occupy residues 246–266 (RKKR…KRNT) and 294–307 (RLGK…KGRK).

The protein belongs to the EBP2 family.

Its subcellular location is the nucleus. It localises to the nucleolus. Its function is as follows. Required for the processing of the 27S pre-rRNA. This is Probable rRNA-processing protein EBP2 homolog from Drosophila melanogaster (Fruit fly).